Consider the following 364-residue polypeptide: Dual-specificity RNA methyltransferase RlmN (364 aa).

Glu93 functions as the Proton acceptor in the catalytic mechanism. Residues 99-337 form the Radical SAM core domain; that stretch reads EDDRGTLCIS…ATIRKTRGDD (239 aa). Cysteines 106 and 342 form a disulfide. [4Fe-4S] cluster contacts are provided by Cys113, Cys117, and Cys120. S-adenosyl-L-methionine-binding positions include 167–168, Ser199, 221–223, and Asn299; these read GE and SLH. Catalysis depends on Cys342, which acts as the S-methylcysteine intermediate.

This sequence belongs to the radical SAM superfamily. RlmN family. The cofactor is [4Fe-4S] cluster.

Its subcellular location is the cytoplasm. It carries out the reaction adenosine(2503) in 23S rRNA + 2 reduced [2Fe-2S]-[ferredoxin] + 2 S-adenosyl-L-methionine = 2-methyladenosine(2503) in 23S rRNA + 5'-deoxyadenosine + L-methionine + 2 oxidized [2Fe-2S]-[ferredoxin] + S-adenosyl-L-homocysteine. The catalysed reaction is adenosine(37) in tRNA + 2 reduced [2Fe-2S]-[ferredoxin] + 2 S-adenosyl-L-methionine = 2-methyladenosine(37) in tRNA + 5'-deoxyadenosine + L-methionine + 2 oxidized [2Fe-2S]-[ferredoxin] + S-adenosyl-L-homocysteine. Specifically methylates position 2 of adenine 2503 in 23S rRNA and position 2 of adenine 37 in tRNAs. m2A2503 modification seems to play a crucial role in the proofreading step occurring at the peptidyl transferase center and thus would serve to optimize ribosomal fidelity. The protein is Dual-specificity RNA methyltransferase RlmN of Dichelobacter nodosus (strain VCS1703A).